The primary structure comprises 720 residues: Glycine--tRNA ligase beta subunit (720 aa).

Belongs to the class-II aminoacyl-tRNA synthetase family. In terms of assembly, tetramer of two alpha and two beta subunits.

It localises to the cytoplasm. The catalysed reaction is tRNA(Gly) + glycine + ATP = glycyl-tRNA(Gly) + AMP + diphosphate. In Acidovorax sp. (strain JS42), this protein is Glycine--tRNA ligase beta subunit.